Consider the following 395-residue polypeptide: Serine-type anaerobic sulfatase-maturating enzyme (395 aa).

The 232-residue stretch at 18–249 folds into the Radical SAM core domain; it reads PRSPVPFHIL…QWRKRCDRGR (232 aa). The [4Fe-4S] cluster site is built by cysteine 35 and cysteine 39. Tyrosine 41 is a binding site for S-adenosyl-L-methionine. Residue cysteine 42 participates in [4Fe-4S] cluster binding. Glycine 84 and arginine 152 together coordinate S-adenosyl-L-methionine. [4Fe-4S] cluster-binding residues include cysteine 270, cysteine 276, and cysteine 291. Aspartate 292 (proton acceptor) is an active-site residue. The [4Fe-4S] cluster site is built by cysteine 331, cysteine 334, cysteine 340, cysteine 344, and cysteine 357.

It belongs to the radical SAM superfamily. Anaerobic sulfatase-maturating enzyme family. As to quaternary structure, monomer. Interacts with AtsA prior to its export to the periplasm. This interaction depends on the presence of AtsA 'Ser-72'. Binding of SAM to AtsB promotes the formation of a ternary AtsA-AtsB-SAM complex. It depends on [4Fe-4S] cluster as a cofactor.

Its subcellular location is the cytoplasm. It carries out the reaction L-seryl-[sulfatase] + S-adenosyl-L-methionine = 3-oxo-L-alanyl-[sulfatase] + 5'-deoxyadenosine + L-methionine + H(+). The protein operates within protein modification; sulfatase oxidation. With respect to regulation, activity is inhibited by iron chelators. Its function is as follows. Involved in 'Ser-type' sulfatase maturation under anaerobic conditions. Catalyzes the post-translational modification of serine ('Ser-72' in the arylsulfatase AtsA) into 3-oxoalanine (also known as C(alpha)-formylglycine (FGly)), by a free radical chemical mechanism initiated via the reductive cleavage of S-adenosyl-L-methionine (SAM). Is capable of catalyzing multiple turnovers. In vitro, use of a peptide substrate in which the target serine is changed to cysteine also gives rise to turnover, supporting approximately 4-fold the activity of that observed with the natural substrate. In Klebsiella pneumoniae, this protein is Serine-type anaerobic sulfatase-maturating enzyme.